A 486-amino-acid polypeptide reads, in one-letter code: UDP-N-acetylglucosamine pyrophosphorylase (486 aa).

The Substrate binding motif lies at 109 to 112; it reads MAGG. Residues 109-112, Lys-123, Gln-199, and Gly-226 contribute to the UTP site; that span reads MAGG. Asn-227 serves as a coordination point for substrate. Asp-257 provides a ligand contact to UTP. The short motif at 309-310 is the Substrate binding element; sequence EY. A UTP-binding site is contributed by Lys-389. Lys-421 provides a ligand contact to substrate.

The protein belongs to the UDPGP type 1 family.

The protein resides in the cytoplasm. The catalysed reaction is N-acetyl-alpha-D-glucosamine 1-phosphate + UTP + H(+) = UDP-N-acetyl-alpha-D-glucosamine + diphosphate. It participates in nucleotide-sugar biosynthesis; UDP-N-acetyl-alpha-D-glucosamine biosynthesis; UDP-N-acetyl-alpha-D-glucosamine from N-acetyl-alpha-D-glucosamine 1-phosphate: step 1/1. The sequence is that of UDP-N-acetylglucosamine pyrophosphorylase (UAP1) from Candida albicans (Yeast).